The sequence spans 272 residues: Bis(5'-nucleosyl)-tetraphosphatase, symmetrical (272 aa).

The protein belongs to the Ap4A hydrolase family.

It carries out the reaction P(1),P(4)-bis(5'-adenosyl) tetraphosphate + H2O = 2 ADP + 2 H(+). In terms of biological role, hydrolyzes diadenosine 5',5'''-P1,P4-tetraphosphate to yield ADP. The sequence is that of Bis(5'-nucleosyl)-tetraphosphatase, symmetrical from Glaesserella parasuis serovar 5 (strain SH0165) (Haemophilus parasuis).